Reading from the N-terminus, the 119-residue chain is MFSLKRQQGASFEHQARLFLESKGLIFIAANQNFKCGELDLIMNDKETIVFVEVRQRSHSAYGSAIESVDWRKQQKWLDAANLWLAKQNMSLEDANCRFDLIAFGKTPQDIQWIPNFLD.

The protein belongs to the UPF0102 family.

The protein is UPF0102 protein HI_1656 of Haemophilus influenzae (strain ATCC 51907 / DSM 11121 / KW20 / Rd).